A 660-amino-acid polypeptide reads, in one-letter code: Zinc transporter ZIP4 (660 aa).

An N-terminal signal peptide occupies residues 1 to 22 (MLPKSVTQGLVLALLVGTVAVA). Residues 23–337 (RPRNLLSLLA…QDQLSQTERY (315 aa)) are Extracellular-facing. 3 disulfides stabilise this stretch: C56–C61, C64–C110, and C160–C195. N-linked (GlcNAc...) asparagine glycans are attached at residues N192 and N219. Positions 233–273 (GVGGEDHSDHDDHGDHADHSHPDRKASHQDSELHTPHNSNS) are disordered. The span at 236–267 (GEDHSDHDDHGDHADHSHPDRKASHQDSELHT) shows a compositional bias: basic and acidic residues. The N-linked (GlcNAc...) asparagine glycan is linked to N272. An intrachain disulfide couples C280 to C319. A helical membrane pass occupies residues 338-358 (LYGSLATLLICLCAVFGLLLL). Residues 359–376 (TCAKCSTATHYIMQTFLS) lie on the Cytoplasmic side of the membrane. Residues 377–397 (LAVGALTGDALLHLIPKVLGL) traverse the membrane as a helical segment. Residues 398 to 420 (HTHGGEGHTHEEEVGVGGQATWR) are Extracellular-facing. Residues 421–441 (LLAVLGGFYIFFLFESFFNLL) form a helical membrane-spanning segment. Residues 442-511 (LPRDQDSEKD…LRAELRLLPY (70 aa)) are Cytoplasmic-facing. The Essential for SLC39A4 endocytosis signature appears at 465–467 (LQL). The chain crosses the membrane as a helical span at residues 512-531 (LITLGDAVHNFADGLAVGAA). Zn(2+)-binding residues include H520, N521, and D524. The Extracellular segment spans residues 532–539 (FSSSWKTG). The helical transmembrane segment at 540 to 566 (LATSLAVFCHELPHELGDFAALLHAGL) threads the bilayer. The Zn(2+) site is built by H549, E550, and H553. Over 567–571 (SVKRA) the chain is Cytoplasmic. Residues 572–592 (LLLNLASALTAFAGLYVALAV) traverse the membrane as a helical segment. Residues 593–599 (GVGEEGE) lie on the Extracellular side of the membrane. Residues 600–620 (AWILAVATGLFLYVALCDMLP) traverse the membrane as a helical segment. Residues 621–630 (AMMNVRDQRP) are Cytoplasmic-facing. Residues 631–651 (WLLFLLHNVGLLGGWTVLLLL) traverse the membrane as a helical segment. Over 652–660 (SLYEDNITF) the chain is Extracellular. The N-linked (GlcNAc...) asparagine glycan is linked to N657.

The protein belongs to the ZIP transporter (TC 2.A.5) family. In terms of assembly, homodimer. Homodimerization is mediated by the transmembrane domain. Post-translationally, the extracellular N-terminal ectodomain is cleaved when cells are Zn(2+) deficient, N-terminally cleaved SLC39A4 is then internalized faster. Under excess Zn(2+) conditions, SLC39A4 on the cell surface is rapidly endocytosed, ubiquitinated, and degraded. In terms of processing, N-glycosylated. As to expression, highly expressed in the small intestine and embryonic visceral yolk sac. Weakly expressed in the stomach and liver.

Its subcellular location is the cell membrane. The protein resides in the recycling endosome membrane. It localises to the apical cell membrane. The enzyme catalyses Zn(2+)(in) = Zn(2+)(out). Its function is as follows. Selective transporter that mediates the uptake of Zn(2+). Plays an essential role for dietary zinc uptake from small intestine. The Zn(2+) uniporter activity is regulated by zinc availability. Also exhibits polyspecific binding and transport of Cu(2+), Cd(2+) and possibly Ni(2+) but at higher concentrations. The protein is Zinc transporter ZIP4 (Slc39a4) of Mus musculus (Mouse).